Reading from the N-terminus, the 394-residue chain is Elongation factor Tu (394 aa).

The 195-residue stretch at 10 to 204 (KPHVNVGTIG…YLDSYIPEPE (195 aa)) folds into the tr-type G domain. The interval 19-26 (GHVDHGKT) is G1. 19–26 (GHVDHGKT) contributes to the GTP binding site. Thr-26 is a Mg(2+) binding site. Positions 60–64 (GITIN) are G2. A G3 region spans residues 81-84 (DCPG). GTP is bound by residues 81-85 (DCPGH) and 136-139 (NKCD). The segment at 136-139 (NKCD) is G4. The interval 174–176 (SAL) is G5.

Belongs to the TRAFAC class translation factor GTPase superfamily. Classic translation factor GTPase family. EF-Tu/EF-1A subfamily. Monomer.

The protein resides in the cytoplasm. It carries out the reaction GTP + H2O = GDP + phosphate + H(+). In terms of biological role, GTP hydrolase that promotes the GTP-dependent binding of aminoacyl-tRNA to the A-site of ribosomes during protein biosynthesis. In Pectobacterium atrosepticum (strain SCRI 1043 / ATCC BAA-672) (Erwinia carotovora subsp. atroseptica), this protein is Elongation factor Tu.